Consider the following 460-residue polypeptide: Elongation factor 1-alpha (460 aa).

Gly-2 carries the n,N,N-trimethylglycine modification. Lys-3 carries the post-translational modification N6,N6-dimethyllysine; alternate. Residue Lys-3 is modified to N6-methyllysine; alternate. Residues 6 to 241 (KTHINVVVIG…DSIEPPKRPT (236 aa)) enclose the tr-type G domain. Positions 15–22 (GHVDSGKS) are G1. GTP is bound at residue 15 to 22 (GHVDSGKS). The segment at 71–75 (GITID) is G2. Lys-80 bears the N6,N6,N6-trimethyllysine mark. The segment at 92–95 (DAPG) is G3. GTP-binding positions include 92–96 (DAPGH) and 154–157 (NKMD). A G4 region spans residues 154-157 (NKMD). Residues 193 to 195 (SGF) are G5. Position 317 is an N6,N6-dimethyllysine; alternate (Lys-317). At Lys-317 the chain carries N6-methyllysine; alternate. At Lys-391 the chain carries N6-methyllysine.

It belongs to the TRAFAC class translation factor GTPase superfamily. Classic translation factor GTPase family. EF-Tu/EF-1A subfamily.

The protein localises to the cytoplasm. In terms of biological role, this protein promotes the GTP-dependent binding of aminoacyl-tRNA to the A-site of ribosomes during protein biosynthesis. This is Elongation factor 1-alpha (tef1) from Hypocrea jecorina (Trichoderma reesei).